The sequence spans 188 residues: Elongation factor P (188 aa).

This sequence belongs to the elongation factor P family.

It localises to the cytoplasm. It participates in protein biosynthesis; polypeptide chain elongation. Involved in peptide bond synthesis. Stimulates efficient translation and peptide-bond synthesis on native or reconstituted 70S ribosomes in vitro. Probably functions indirectly by altering the affinity of the ribosome for aminoacyl-tRNA, thus increasing their reactivity as acceptors for peptidyl transferase. The polypeptide is Elongation factor P (Anaplasma marginale (strain St. Maries)).